The primary structure comprises 1357 residues: DNA-directed RNA polymerase subunit beta (1357 aa).

This sequence belongs to the RNA polymerase beta chain family. The RNAP catalytic core consists of 2 alpha, 1 beta, 1 beta' and 1 omega subunit. When a sigma factor is associated with the core the holoenzyme is formed, which can initiate transcription.

It catalyses the reaction RNA(n) + a ribonucleoside 5'-triphosphate = RNA(n+1) + diphosphate. Functionally, DNA-dependent RNA polymerase catalyzes the transcription of DNA into RNA using the four ribonucleoside triphosphates as substrates. This chain is DNA-directed RNA polymerase subunit beta, found in Nitrosomonas europaea (strain ATCC 19718 / CIP 103999 / KCTC 2705 / NBRC 14298).